A 266-amino-acid chain; its full sequence is Tryptophan synthase alpha chain (266 aa).

Catalysis depends on proton acceptor residues glutamate 51 and aspartate 62.

This sequence belongs to the TrpA family. As to quaternary structure, tetramer of two alpha and two beta chains.

It catalyses the reaction (1S,2R)-1-C-(indol-3-yl)glycerol 3-phosphate + L-serine = D-glyceraldehyde 3-phosphate + L-tryptophan + H2O. The protein operates within amino-acid biosynthesis; L-tryptophan biosynthesis; L-tryptophan from chorismate: step 5/5. Its function is as follows. The alpha subunit is responsible for the aldol cleavage of indoleglycerol phosphate to indole and glyceraldehyde 3-phosphate. The polypeptide is Tryptophan synthase alpha chain (Thermosynechococcus vestitus (strain NIES-2133 / IAM M-273 / BP-1)).